The primary structure comprises 258 residues: Trypsin eta (258 aa).

A signal peptide spans 1–22 (MNKVILRILALLFLLGIGAVSA). The propeptide at 23–27 (QPDGR) is activation peptide. The region spanning 28-258 (IVGGADTTNY…YFKDWIASRV (231 aa)) is the Peptidase S1 domain. Cys-59 and Cys-75 are disulfide-bonded. Active-site charge relay system residues include His-74 and Asp-120. 2 disulfides stabilise this stretch: Cys-185-Cys-200 and Cys-211-Cys-235. The Charge relay system role is filled by Ser-215.

Belongs to the peptidase S1 family.

The protein resides in the secreted. The protein localises to the extracellular space. The enzyme catalyses Preferential cleavage: Arg-|-Xaa, Lys-|-Xaa.. The sequence is that of Trypsin eta (etaTry) from Drosophila erecta (Fruit fly).